The following is a 776-amino-acid chain: V-set and immunoglobulin domain-containing protein 10-like 2 (776 aa).

A signal peptide spans 1 to 28; it reads MVGLSAHHRPLGCRLLILFCLLHPGASG. Ig-like domains are found at residues 32-140, 150-234, 242-324, 399-498, and 500-592; these read PTSN…LYLM, PRVQ…AFLD, PVIT…TTVQ, PTLA…LRLE, and PQLT…VLLE. 5 disulfides stabilise this stretch: C56–C122, C169–C217, C268–C308, C435–C480, and C521–C576. The Fibronectin type-III domain maps to 608-708; that stretch reads TPPNVTISRL…EVKTPVDPAF (101 aa). N-linked (GlcNAc...) asparagine glycosylation is found at N611 and N637. The chain crosses the membrane as a helical span at residues 713–733; sequence AVLGAAGTGVVVALATSLLVF.

The protein localises to the membrane. This is V-set and immunoglobulin domain-containing protein 10-like 2 from Mus musculus (Mouse).